The primary structure comprises 86 residues: Small ribosomal subunit protein bS20 (86 aa).

The span at 1-11 shows a compositional bias: basic residues; it reads MANIKQQKKRN. The interval 1 to 21 is disordered; that stretch reads MANIKQQKKRNKTNEKRRLQN.

This sequence belongs to the bacterial ribosomal protein bS20 family.

Its function is as follows. Binds directly to 16S ribosomal RNA. The sequence is that of Small ribosomal subunit protein bS20 from Onion yellows phytoplasma (strain OY-M).